A 263-amino-acid polypeptide reads, in one-letter code: MLATIDPIALRLGPISIHWYAICIVSGLLLAVYLAQRLAPEKGINPEHILDFILLAFPIAIVGARLYYVIFQWSYYSQNPSEIFAIWNGGIAIYGGLIAGAAVLYWFAKRHAIAVLDFLDIAAPGVMIAQSIGRWGNFVNQEAYGKAVSQLNYLPEIIRQQMFIDGSYRVPTFLYESLWNLVGFSIILGLRYFNKGLRQGDVTSFYLIWYGLGRFVIEGMRTDSLMFAGLRVSQWVSISIIILGAVLLYFRKQRQKADYKMKN.

The next 4 membrane-spanning stretches (helical) occupy residues 15–35 (ISIH…VYLA), 52–72 (FILL…VIFQ), 83–103 (IFAI…GAAV), and 112–132 (AIAV…AQSI). Residue R134 participates in a 1,2-diacyl-sn-glycero-3-phospho-(1'-sn-glycerol) binding. Transmembrane regions (helical) follow at residues 170–190 (VPTF…ILGL), 200–220 (GDVT…IEGM), and 230–250 (LRVS…LLYF).

It belongs to the Lgt family.

Its subcellular location is the cell membrane. It carries out the reaction L-cysteinyl-[prolipoprotein] + a 1,2-diacyl-sn-glycero-3-phospho-(1'-sn-glycerol) = an S-1,2-diacyl-sn-glyceryl-L-cysteinyl-[prolipoprotein] + sn-glycerol 1-phosphate + H(+). Its pathway is protein modification; lipoprotein biosynthesis (diacylglyceryl transfer). Catalyzes the transfer of the diacylglyceryl group from phosphatidylglycerol to the sulfhydryl group of the N-terminal cysteine of a prolipoprotein, the first step in the formation of mature lipoproteins. This chain is Phosphatidylglycerol--prolipoprotein diacylglyceryl transferase, found in Streptococcus thermophilus (strain ATCC BAA-250 / LMG 18311).